Here is a 136-residue protein sequence, read N- to C-terminus: Ribonuclease P protein component (136 aa).

The interval 116-136 (RPQRAAAKGSAGTTQKGTPRA) is disordered. Residues 126 to 136 (AGTTQKGTPRA) are compositionally biased toward polar residues.

Belongs to the RnpA family. As to quaternary structure, consists of a catalytic RNA component (M1 or rnpB) and a protein subunit.

The enzyme catalyses Endonucleolytic cleavage of RNA, removing 5'-extranucleotides from tRNA precursor.. Functionally, RNaseP catalyzes the removal of the 5'-leader sequence from pre-tRNA to produce the mature 5'-terminus. It can also cleave other RNA substrates such as 4.5S RNA. The protein component plays an auxiliary but essential role in vivo by binding to the 5'-leader sequence and broadening the substrate specificity of the ribozyme. The chain is Ribonuclease P protein component from Pseudarthrobacter chlorophenolicus (strain ATCC 700700 / DSM 12829 / CIP 107037 / JCM 12360 / KCTC 9906 / NCIMB 13794 / A6) (Arthrobacter chlorophenolicus).